The following is a 179-amino-acid chain: Large ribosomal subunit protein uL6 (179 aa).

This sequence belongs to the universal ribosomal protein uL6 family. As to quaternary structure, part of the 50S ribosomal subunit.

Functionally, this protein binds to the 23S rRNA, and is important in its secondary structure. It is located near the subunit interface in the base of the L7/L12 stalk, and near the tRNA binding site of the peptidyltransferase center. The chain is Large ribosomal subunit protein uL6 from Chlorobium phaeobacteroides (strain BS1).